A 177-amino-acid polypeptide reads, in one-letter code: ECF RNA polymerase sigma factor SigL (177 aa).

The segment at 18–85 (LYDEHAAVLW…MIIDERRSAR (68 aa)) is sigma-70 factor domain-2. The short motif at 42-45 (DVVQ) is the Interaction with polymerase core subunit RpoC element. Residues 119–167 (ALAQLSAEHRAVIQRSYYRGWSTAQIATDLGIAEGTVKSRLHYAVRALR) are sigma-70 factor domain-4. The segment at residues 141–160 (TAQIATDLGIAEGTVKSRLH) is a DNA-binding region (H-T-H motif).

It belongs to the sigma-70 factor family. ECF subfamily. Interacts transiently with the RNA polymerase catalytic core formed by RpoA, RpoB, RpoC and RpoZ (2 alpha, 1 beta, 1 beta' and 1 omega subunit) to form the RNA polymerase holoenzyme that can initiate transcription. Interacts (via sigma-70 factor domain 4) with anti-sigma-L factor RslA.

Functionally, sigma factors are initiation factors that promote the attachment of RNA polymerase to specific initiation sites and are then released. Extracytoplasmic function (ECF) sigma factors are held in an inactive form by an anti-sigma factor until released by regulated intramembrane proteolysis. The sequence is that of ECF RNA polymerase sigma factor SigL (sigL) from Mycobacterium tuberculosis (strain ATCC 35801 / TMC 107 / Erdman).